The chain runs to 158 residues: MATIEGTFEKSSSLKVAIVIARFNDLITNKLLSGCLDCLSRHGIDVSESSNQIDVAWVPGSFELPIISQELARTGKYEVLITLGAVIRGDTPHFDVVVSEASKGIATVSRETGVPIIFGVLTTDTMQQALERAGIKNNLGWSYALQALEMGSLMKAVT.

Residues F23, 61-63 (SFE), and 85-87 (AVI) each bind 5-amino-6-(D-ribitylamino)uracil. 90-91 (DT) lines the (2S)-2-hydroxy-3-oxobutyl phosphate pocket. Catalysis depends on H93, which acts as the Proton donor. F118 provides a ligand contact to 5-amino-6-(D-ribitylamino)uracil. R132 is a binding site for (2S)-2-hydroxy-3-oxobutyl phosphate.

This sequence belongs to the DMRL synthase family.

It carries out the reaction (2S)-2-hydroxy-3-oxobutyl phosphate + 5-amino-6-(D-ribitylamino)uracil = 6,7-dimethyl-8-(1-D-ribityl)lumazine + phosphate + 2 H2O + H(+). The protein operates within cofactor biosynthesis; riboflavin biosynthesis; riboflavin from 2-hydroxy-3-oxobutyl phosphate and 5-amino-6-(D-ribitylamino)uracil: step 1/2. Its function is as follows. Catalyzes the formation of 6,7-dimethyl-8-ribityllumazine by condensation of 5-amino-6-(D-ribitylamino)uracil with 3,4-dihydroxy-2-butanone 4-phosphate. This is the penultimate step in the biosynthesis of riboflavin. This Prochlorococcus marinus (strain NATL1A) protein is 6,7-dimethyl-8-ribityllumazine synthase.